Consider the following 613-residue polypeptide: Probable inactive purple acid phosphatase 1 (613 aa).

A signal peptide spans 1–24 (MRESLVAILVTVISVLGAIHQVKS). N-linked (GlcNAc...) asparagine glycans are attached at residues N89 and N116. D295 is a Fe cation binding site. N316 carries N-linked (GlcNAc...) asparagine glycosylation. Fe cation-binding residues include D336 and Y339. D336 is a Zn(2+) binding site. Residues N369, H458, and H500 each contribute to the Zn(2+) site. Residue N369 participates in substrate binding. 500 to 502 (HAH) serves as a coordination point for substrate. Residue H502 participates in Fe cation binding. Residues N528 and N551 are each glycosylated (N-linked (GlcNAc...) asparagine).

The protein belongs to the metallophosphoesterase superfamily. Purple acid phosphatase family. Homodimer. Fe cation serves as cofactor. Requires Zn(2+) as cofactor. In terms of tissue distribution, expressed in roots, stems, leaves, flowers and siliques.

Its subcellular location is the secreted. This Arabidopsis thaliana (Mouse-ear cress) protein is Probable inactive purple acid phosphatase 1 (PAP1).